We begin with the raw amino-acid sequence, 418 residues long: Aminodeoxyfutalosine deaminase (418 aa).

Zn(2+) contacts are provided by His97 and His99. Glu173 and His211 together coordinate substrate. His238 provides a ligand contact to Zn(2+). Glu241 acts as the Proton donor in catalysis. Asp352 lines the Zn(2+) pocket.

This sequence belongs to the metallo-dependent hydrolases superfamily. Zn(2+) is required as a cofactor.

The catalysed reaction is 6-amino-6-deoxyfutalosine + H2O + H(+) = futalosine + NH4(+). Its pathway is quinol/quinone metabolism; menaquinone biosynthesis. Its function is as follows. Catalyzes the deamination of aminodeoxyfutalosine (AFL) into futalosine (FL). To a lesser extent, can also deaminate 5'-deoxyadenosine, 5'-methylthioadenosine, 2'-deoxyadenosine, adenosine, 1-(6-amino-9H-purin-9-yl)-1-deoxy-N-ethyl-beta-D-ribofuranuronamide (NECA), and S-adenosylhomocysteine. This is Aminodeoxyfutalosine deaminase from Deinococcus radiodurans (strain ATCC 13939 / DSM 20539 / JCM 16871 / CCUG 27074 / LMG 4051 / NBRC 15346 / NCIMB 9279 / VKM B-1422 / R1).